We begin with the raw amino-acid sequence, 167 residues long: uncharacterized protein (167 aa).

The tract at residues Ser140–Phe167 is disordered. Over residues Lys145 to Lys154 the composition is skewed to basic residues.

This is an uncharacterized protein from Saccharomyces cerevisiae (strain ATCC 204508 / S288c) (Baker's yeast).